The following is a 233-amino-acid chain: Large ribosomal subunit protein uL3 (233 aa).

The segment at Phe-145–Arg-172 is disordered. Gln-168 is modified (N5-methylglutamine).

It belongs to the universal ribosomal protein uL3 family. In terms of assembly, part of the 50S ribosomal subunit. Forms a cluster with proteins L14 and L19. Post-translationally, methylated by PrmB.

One of the primary rRNA binding proteins, it binds directly near the 3'-end of the 23S rRNA, where it nucleates assembly of the 50S subunit. The polypeptide is Large ribosomal subunit protein uL3 (Bordetella petrii (strain ATCC BAA-461 / DSM 12804 / CCUG 43448)).